Reading from the N-terminus, the 398-residue chain is CCA-adding enzyme (398 aa).

ATP contacts are provided by Gly32 and Arg35. Positions 32 and 35 each coordinate CTP. Residues Asp45 and Asp47 each contribute to the Mg(2+) site. Residues Arg119, Asp162, Arg165, Arg168, and Arg171 each coordinate ATP. 5 residues coordinate CTP: Arg119, Asp162, Arg165, Arg168, and Arg171.

The protein belongs to the tRNA nucleotidyltransferase/poly(A) polymerase family. Bacterial CCA-adding enzyme type 3 subfamily. As to quaternary structure, homodimer. Mg(2+) serves as cofactor.

The catalysed reaction is a tRNA precursor + 2 CTP + ATP = a tRNA with a 3' CCA end + 3 diphosphate. The enzyme catalyses a tRNA with a 3' CCA end + 2 CTP + ATP = a tRNA with a 3' CCACCA end + 3 diphosphate. Its function is as follows. Catalyzes the addition and repair of the essential 3'-terminal CCA sequence in tRNAs without using a nucleic acid template. Adds these three nucleotides in the order of C, C, and A to the tRNA nucleotide-73, using CTP and ATP as substrates and producing inorganic pyrophosphate. tRNA 3'-terminal CCA addition is required both for tRNA processing and repair. Also involved in tRNA surveillance by mediating tandem CCA addition to generate a CCACCA at the 3' terminus of unstable tRNAs. While stable tRNAs receive only 3'-terminal CCA, unstable tRNAs are marked with CCACCA and rapidly degraded. This Lactococcus lactis subsp. lactis (strain IL1403) (Streptococcus lactis) protein is CCA-adding enzyme.